A 254-amino-acid polypeptide reads, in one-letter code: Axonemal dynein light intermediate polypeptide 1 (254 aa).

Positions 1-55 (MIPPADSLLKHDNPVLISKNTERKSPKSRPLKVSSPQTVLTAPVPPPPKPKTPLL) are disordered. The stretch at 175–245 (ALQAEQGKSD…KRTNQQLKAQ (71 aa)) forms a coiled coil.

Belongs to the inner dynein arm light chain family.

Its subcellular location is the cell projection. It localises to the cilium. It is found in the flagellum. The protein resides in the dynein axonemal particle. The protein localises to the cytoplasm. Functionally, involved in sperm flagellum assembly. The protein is Axonemal dynein light intermediate polypeptide 1 of Xenopus laevis (African clawed frog).